Consider the following 206-residue polypeptide: Uridine kinase (206 aa).

11–18 (GGTGSGKS) lines the ATP pocket.

This sequence belongs to the uridine kinase family.

The protein resides in the cytoplasm. It carries out the reaction uridine + ATP = UMP + ADP + H(+). It catalyses the reaction cytidine + ATP = CMP + ADP + H(+). The protein operates within pyrimidine metabolism; CTP biosynthesis via salvage pathway; CTP from cytidine: step 1/3. Its pathway is pyrimidine metabolism; UMP biosynthesis via salvage pathway; UMP from uridine: step 1/1. This is Uridine kinase from Clostridium botulinum (strain Langeland / NCTC 10281 / Type F).